The chain runs to 367 residues: Peptide chain release factor 2 (367 aa).

Glutamine 249 is modified (N5-methylglutamine).

This sequence belongs to the prokaryotic/mitochondrial release factor family. In terms of processing, methylated by PrmC. Methylation increases the termination efficiency of RF2.

The protein localises to the cytoplasm. Its function is as follows. Peptide chain release factor 2 directs the termination of translation in response to the peptide chain termination codons UGA and UAA. The protein is Peptide chain release factor 2 of Pseudothermotoga lettingae (strain ATCC BAA-301 / DSM 14385 / NBRC 107922 / TMO) (Thermotoga lettingae).